Here is a 150-residue protein sequence, read N- to C-terminus: Non-structural protein (150 aa).

An apoptotic activity region spans residues 93–140; it reads PLFRIRFLLLIMSDSISLTDITISPGTLYSARTLLLRAAVLALTRKPM.

Its function is as follows. Disrupts the host mitochondrial membrane potential and induces apoptosis probably by inducing host CASP8 and CASP9. This Bos taurus (Bovine) protein is Non-structural protein.